The sequence spans 236 residues: Endo-1,4-beta-xylanase 3 (236 aa).

Residues 1–45 (MQILTWALAALAAIPAVTAAPVETVEASSMDELVERSPNVTLVAR) form the signal peptide. Residues Asn39 and Asn106 are each glycosylated (N-linked (GlcNAc...) asparagine). The region spanning 46–236 (GTPSSTGTHN…SSGSASMTVR (191 aa)) is the GH11 domain. The active-site Nucleophile is Glu131. Residue Glu223 is the Proton donor of the active site.

This sequence belongs to the glycosyl hydrolase 11 (cellulase G) family.

The protein localises to the secreted. The enzyme catalyses Endohydrolysis of (1-&gt;4)-beta-D-xylosidic linkages in xylans.. Its pathway is glycan degradation; xylan degradation. Its function is as follows. Endo-1,4-beta-xylanase involved in the hydrolysis of xylan, a major structural heterogeneous polysaccharide found in plant biomass representing the second most abundant polysaccharide in the biosphere, after cellulose. This Pyricularia grisea (Crabgrass-specific blast fungus) protein is Endo-1,4-beta-xylanase 3 (XYL3).